Consider the following 739-residue polypeptide: Eukaryotic translation initiation factor 3 subunit B (739 aa).

Positions 39–125 (AFVVIDGLPV…HTLAVNKLTD (87 aa)) constitute an RRM domain. 5 WD repeats span residues 191–229 (RDHW…KQKQ), 231–288 (PHPF…RSFV), 457–498 (SLKD…SFFA), 516–559 (IEKK…EKPE), and 574–612 (NEHF…HTFS).

Belongs to the eIF-3 subunit B family. Component of the eukaryotic translation initiation factor 3 (eIF-3) complex.

The protein resides in the cytoplasm. Its function is as follows. RNA-binding component of the eukaryotic translation initiation factor 3 (eIF-3) complex, which is involved in protein synthesis of a specialized repertoire of mRNAs and, together with other initiation factors, stimulates binding of mRNA and methionyl-tRNAi to the 40S ribosome. The eIF-3 complex specifically targets and initiates translation of a subset of mRNAs involved in cell proliferation. This Coccidioides immitis (strain RS) (Valley fever fungus) protein is Eukaryotic translation initiation factor 3 subunit B.